The chain runs to 104 residues: Large ribosomal subunit protein uL23 (104 aa).

Belongs to the universal ribosomal protein uL23 family. In terms of assembly, part of the 50S ribosomal subunit. Contacts protein L29, and trigger factor when it is bound to the ribosome.

Functionally, one of the early assembly proteins it binds 23S rRNA. One of the proteins that surrounds the polypeptide exit tunnel on the outside of the ribosome. Forms the main docking site for trigger factor binding to the ribosome. This chain is Large ribosomal subunit protein uL23, found in Ralstonia nicotianae (strain ATCC BAA-1114 / GMI1000) (Ralstonia solanacearum).